Consider the following 123-residue polypeptide: Ribosome-binding factor A (123 aa).

The protein belongs to the RbfA family. As to quaternary structure, monomer. Binds 30S ribosomal subunits, but not 50S ribosomal subunits or 70S ribosomes.

The protein resides in the cytoplasm. Functionally, one of several proteins that assist in the late maturation steps of the functional core of the 30S ribosomal subunit. Associates with free 30S ribosomal subunits (but not with 30S subunits that are part of 70S ribosomes or polysomes). Required for efficient processing of 16S rRNA. May interact with the 5'-terminal helix region of 16S rRNA. The sequence is that of Ribosome-binding factor A from Neisseria meningitidis serogroup C (strain 053442).